The primary structure comprises 248 residues: N-acylneuraminate-9-phosphatase (248 aa).

Mg(2+) is bound at residue Asp12. Phosphate is bound by residues Leu13, Asp14, Thr131, Asn132, and Lys164. Asp14 lines the Mg(2+) pocket. Position 189 (Asp189) interacts with Mg(2+).

The protein belongs to the HAD-like hydrolase superfamily. NANP family. Requires Mg(2+) as cofactor.

The enzyme catalyses N-acetylneuraminate 9-phosphate + H2O = N-acetylneuraminate + phosphate. It catalyses the reaction N-glycoloylneuraminate 9-phosphate + H2O = N-glycoloylneuraminate + phosphate. Its pathway is amino-sugar metabolism; N-acetylneuraminate biosynthesis. With respect to regulation, inhibited by calcium. Inhibited by vanadate, sodium orthovanate and phosphonate. Catalyzes the dephosphorylation of N-acylneuraminate 9-phosphate (Neu5Ac-9-P) to sialic acid N-acetylneuraminic acid (Neu5Ac). May also use N-glycoloylneuraminate 9-phosphate as substrate. The polypeptide is N-acylneuraminate-9-phosphatase (Mus musculus (Mouse)).